Consider the following 308-residue polypeptide: Putative S-adenosyl-L-methionine-dependent methyltransferase Mb3816c (308 aa).

Residues Asp-131 and 160–161 (DL) each bind S-adenosyl-L-methionine.

Belongs to the UPF0677 family.

Exhibits S-adenosyl-L-methionine-dependent methyltransferase activity. The sequence is that of Putative S-adenosyl-L-methionine-dependent methyltransferase Mb3816c from Mycobacterium bovis (strain ATCC BAA-935 / AF2122/97).